The following is a 107-amino-acid chain: EPIDERMAL PATTERNING FACTOR-like protein 5 (107 aa).

The signal sequence occupies residues Met-1–Ala-22. Intrachain disulfides connect Cys-64/Cys-98, Cys-68/Cys-74, and Cys-71/Cys-100.

It belongs to the plant cysteine rich small secretory peptide family. Epidermal patterning factor subfamily. Interacts with ERECTA. As to expression, expressed asymetically in the hypocotyl, on the side proximal to the folded cotyledons at germination. Detected in developing flowers, the chalazal region of ovules and near the root apex, but not in inflorescence stems. Expressed in cotyledons, flowers, adult leaves and fruits.

Its subcellular location is the secreted. Controls stomatal patterning. Mediates differentiation of stomatal lineage cells to pavement cells and stomatal development inhibition. TMM (AC Q9SSD1) functions to dampen or block CLL1 signaling. Acts as a growth-regulatory ligand for ERECTA family receptors. Promotes fruit growth and fertility. The protein is EPIDERMAL PATTERNING FACTOR-like protein 5 of Arabidopsis thaliana (Mouse-ear cress).